The following is a 554-amino-acid chain: Trichloroethene reductive dehalogenase (554 aa).

Positions 1-42 (MSEKYHSTVTRRDFMKRLGLAGAGAGALGAAVLAENNLPHEF) form a signal peptide, tat-type signal. 2 consecutive 4Fe-4S ferredoxin-type domains span residues 425-457 (PTKP…HEGP) and 471-500 (EGWH…NNSW). [4Fe-4S] cluster contacts are provided by Cys437, Cys440, Cys443, Cys447, Cys480, Cys483, Cys486, and Cys490.

This sequence belongs to the PceA family. The cofactor is [4Fe-4S] cluster. Corrinoid is required as a cofactor. Predicted to be exported by the Tat system. The position of the signal peptide cleavage has been experimentally proven.

It localises to the cell membrane. The enzyme catalyses trichloroethene + AH2 = (Z)-1,2-dichloroethene + chloride + A + H(+). It carries out the reaction (Z)-1,2-dichloroethene + AH2 = chloroethene + chloride + A + H(+). It catalyses the reaction 1,1-dichloroethene + AH2 = chloroethene + chloride + A + H(+). Its activity is regulated as follows. Loses 93% of its activity upon incubation with 1-iodopropane and titanium(III) citrate in the dark. Subsequent exposure to light restores 80% of the original activity. Completely inhibited by 2 mM sodium sulfite or sodium dithionite, and by 1 mM cuprous chloride. Its function is as follows. Catalyzes the reductive dechlorination of trichloroethene (TCE) to cis-1,2-dichloroethene (DCE) and of cis-1,2-dichloroethene to chloroethene. The substrate specificity is broad, and the enzyme can dehalogenate various substrates, including 1,1-dichloroethene (1,1-DCE), 1,2-dichloroethane and 1,2-dibromoethane. A variety of other haloalkanes and haloalkenes containing three to five carbon atoms are dehalogenated at lower rates. Trans-1,2-dichloroethene (trans-DCE) and chloroethene are degraded at rates which are approximately 2 orders of magnitude lower. Titanium(III) citrate and methyl viologen can be used as reductants. This is Trichloroethene reductive dehalogenase from Dehalococcoides mccartyi (strain ATCC BAA-2266 / KCTC 15142 / 195) (Dehalococcoides ethenogenes (strain 195)).